The primary structure comprises 232 residues: Small ribosomal subunit protein uS2 (232 aa).

Belongs to the universal ribosomal protein uS2 family.

This Carboxydothermus hydrogenoformans (strain ATCC BAA-161 / DSM 6008 / Z-2901) protein is Small ribosomal subunit protein uS2.